A 235-amino-acid chain; its full sequence is Urease accessory protein UreF (235 aa).

Belongs to the UreF family. UreD, UreF and UreG form a complex that acts as a GTP-hydrolysis-dependent molecular chaperone, activating the urease apoprotein by helping to assemble the nickel containing metallocenter of UreC. The UreE protein probably delivers the nickel.

Its subcellular location is the cytoplasm. Its function is as follows. Required for maturation of urease via the functional incorporation of the urease nickel metallocenter. This is Urease accessory protein UreF from Haemophilus influenzae (strain PittEE).